The chain runs to 370 residues: MRVKEQLLTLRAYVPGKNIEEVKREYGLSKIVKLASNENPFGCSARVTEALTSLASQYALYPDGHAFELRTQVAKHLGVKVEQLLFGSGLDEVIQMISRALLHEGTNVVMANPTFSQYHHHAVIEGAEVREVSLKDGIHDLDAMLQQVDDQTKIVWICNPNNPTGTYVEKQKLLSFLEAVPKSALVIMDEAYYEYAGAEDYPQTLPLLEKYENLMVLRTFSKAYGLAAFRIGYAVGNTELIGQLEVARLPFNTSTVAQSVALAALEDQAFLQECVKKNEEGLHQYYAFCKEYNVFYYPSQTNFIFLKLGIPGNEAFERLMKKGYIVRSGAAFGIDDGIRITVGLKEENDEIIELLKELVNEQVQKEETYS.

Lysine 222 bears the N6-(pyridoxal phosphate)lysine mark.

Belongs to the class-II pyridoxal-phosphate-dependent aminotransferase family. Histidinol-phosphate aminotransferase subfamily. In terms of assembly, homodimer. Pyridoxal 5'-phosphate serves as cofactor.

The catalysed reaction is L-histidinol phosphate + 2-oxoglutarate = 3-(imidazol-4-yl)-2-oxopropyl phosphate + L-glutamate. Its pathway is amino-acid biosynthesis; L-histidine biosynthesis; L-histidine from 5-phospho-alpha-D-ribose 1-diphosphate: step 7/9. This is Histidinol-phosphate aminotransferase 1 from Bacillus cereus (strain ZK / E33L).